The sequence spans 537 residues: Cytoplasmic dynein 2 intermediate chain 2 (537 aa).

The residue at position 15 (S15) is a Phosphoserine. The DYNLL2 binding stretch occupies residues 80-93 (RTHADAQVQTEAPE). The segment at 107–132 (LRLEAFLRRVEAMVIRELNNNWQSHA) is DYNLRB1 binding. 5 WD repeats span residues 216–256 (EVPS…DPLL), 265–309 (THTD…QLRL), 391–431 (PHGG…PLTS), 434–474 (LSHK…QKPT), and 481–521 (QDGS…TEQG).

Belongs to the dynein light intermediate chain family. In terms of assembly, the cytoplasmic dynein 2 complex consists of two catalytic heavy chains (HCs) and a number of non-catalytic subunits presented by intermediate chains (ICs), light intermediate chains (LICs) and light chains (LCs). Among them, a heavy chain (DYNC2H1), two intermediate chains (DYNC2I2 and DYNC2I1), a light intermediate chain (DYNC2LI1), and a light chain (DYNLT2B) are unique to the cytoplasmic dynein complex 2, but a subset of the light chains are also shared by dynein-1 and dynein-2 complexes. Interacts with DYNC2I1; their C-terminal domains each bind a copy of the heavy chain, and their extended N-terminal regions are held together by an array of light chain dimers. Interacts with DYNLL2; this interaction is essential for dynein-2-mediated retrograde trafficking of ciliary proteins. Interacts with DYNLRB1; this interaction is essential for dynein-2-mediated retrograde trafficking of ciliary proteins. Interacts (via the WD domains) with MAP3K7 and TAB3. Interacts (via WD domains) with TAB2 (via C-terminus). Interacts (via WD domains) with TRAF6 (via TRAF-type domains). In terms of tissue distribution, expressed in brain, thymus, heart, lung, liver, spleen, kidney, testis and intestine.

The protein localises to the cytoplasm. It is found in the cytoskeleton. Its subcellular location is the cilium basal body. It localises to the cilium axoneme. The protein resides in the cell projection. The protein localises to the cilium. It is found in the microtubule organizing center. Its subcellular location is the centrosome. It localises to the filopodium. Functionally, acts as one of several non-catalytic accessory components of the cytoplasmic dynein 2 complex (dynein-2 complex), a motor protein complex that drives the movement of cargos along microtubules within cilia and flagella in concert with the intraflagellar transport (IFT) system. DYNC2I2 plays a major role in retrograde ciliary protein trafficking and in ciliogenesis. Required also to maintain a functional transition zone. Its function is as follows. Acts as a negative regulator of the Toll-like and IL-1R receptor signaling pathways. Inhibits the MAP3K7-induced NF-kappa-B activation pathway. Inhibits MAP3K7 phosphorylation at 'Thr-184' and 'Thr-187' upon Il-1 beta stimulation. The polypeptide is Cytoplasmic dynein 2 intermediate chain 2 (Dync2i2) (Mus musculus (Mouse)).